Reading from the N-terminus, the 758-residue chain is MTTLHFSGFPRVGAFRELKFAQEKYWRKEISEQELLAVAKDLREKNWKHQAAANADYVAVGDFTFYDHILDLQVATGAIPARFGFDSQNLSLEQFFQLARGNKDQFAIEMTKWFDTNYHYLVPEFHADTEFKANAKHYVQQLQEAQALGLKAKPTVVGPLTFLWVGKEKGAVEFDRLSLLPKLLPVYVEILTALVEAGAEWIQIDEPALTVDLPKEWVEAYKDVYATLSKVSAKILLGTYFGSVAEHAALLKALPVDGLHIDLVRAPEQPDAFADYDKVLSVGVIDGRNIWRANLNKVLETVEPLQAKLGERLWISSSCSLLHTPFDLSVEEKLKANKPDLYSWLAFTLQKTQELRVLKAALNEGRDSVAEELAASQAAADSRANSSEIHRADVAKRLADLPANADQRKSPFVNRIKAQQAWLNLPLLPTTNIGSFPQTTEIRQARAAFKKGELSAADYEAAMKKEIALVVEEQEKLDLDVLVHGEAERNDMVEYFGELLSGFAFTQYGWVQSYGSRCVKPPIIFGDVSRPEAMTVAWSTYAQSLTKRPMKGMLTGPVTILQWSFVRNDIPRATVCKQIALALNDEVLDLEKAGIKVIQIDEPAIREGLPLKRADWDAYLNWAGESFRLSSAGCEDSTQIHTHMCYSEFNDILPAIAAMDADVITIETSRSDMELLTAFGKFKYPNDIGPGVYDIHSPRVPTEAEVEHLLRKAIEVVPVERLWVNPDCGLKTRGWKETLEQLQVMMNVTRKLRAELAK.

Residues 16-19 (RELK) and Lys-112 contribute to the 5-methyltetrahydropteroyltri-L-glutamate site. L-homocysteine contacts are provided by residues 433–435 (IGS) and Glu-486. Residues 433 to 435 (IGS) and Glu-486 contribute to the L-methionine site. 5-methyltetrahydropteroyltri-L-glutamate-binding positions include 517-518 (RC) and Trp-563. Residue Asp-601 participates in L-homocysteine binding. Asp-601 lines the L-methionine pocket. Residue Glu-607 participates in 5-methyltetrahydropteroyltri-L-glutamate binding. Residues His-643, Cys-645, and Glu-667 each contribute to the Zn(2+) site. His-696 (proton donor) is an active-site residue. Zn(2+) is bound at residue Cys-728.

The protein belongs to the vitamin-B12 independent methionine synthase family. The cofactor is Zn(2+).

The catalysed reaction is 5-methyltetrahydropteroyltri-L-glutamate + L-homocysteine = tetrahydropteroyltri-L-glutamate + L-methionine. Its pathway is amino-acid biosynthesis; L-methionine biosynthesis via de novo pathway; L-methionine from L-homocysteine (MetE route): step 1/1. In terms of biological role, catalyzes the transfer of a methyl group from 5-methyltetrahydrofolate to homocysteine resulting in methionine formation. This Neisseria meningitidis serogroup C (strain 053442) protein is 5-methyltetrahydropteroyltriglutamate--homocysteine methyltransferase.